A 253-amino-acid polypeptide reads, in one-letter code: Pimeloyl-[acyl-carrier protein] methyl ester esterase (253 aa).

Residues Trp-18, 78–79 (SL), and 139–143 (FLALD) contribute to the substrate site. The active-site Nucleophile is Ser-78. Active-site residues include Asp-203 and His-231. His-231 serves as a coordination point for substrate.

The protein belongs to the AB hydrolase superfamily. Carboxylesterase BioH family. In terms of assembly, monomer.

Its subcellular location is the cytoplasm. The catalysed reaction is 6-carboxyhexanoyl-[ACP] methyl ester + H2O = 6-carboxyhexanoyl-[ACP] + methanol + H(+). Its pathway is cofactor biosynthesis; biotin biosynthesis. Functionally, the physiological role of BioH is to remove the methyl group introduced by BioC when the pimeloyl moiety is complete. It allows to synthesize pimeloyl-ACP via the fatty acid synthetic pathway through the hydrolysis of the ester bonds of pimeloyl-ACP esters. This chain is Pimeloyl-[acyl-carrier protein] methyl ester esterase, found in Xanthomonas axonopodis pv. citri (strain 306).